Consider the following 577-residue polypeptide: Arginine--tRNA ligase (577 aa).

The short motif at 122-132 (PNVAKEMHVGH) is the 'HIGH' region element.

It belongs to the class-I aminoacyl-tRNA synthetase family. In terms of assembly, monomer.

The protein localises to the cytoplasm. The catalysed reaction is tRNA(Arg) + L-arginine + ATP = L-arginyl-tRNA(Arg) + AMP + diphosphate. The protein is Arginine--tRNA ligase of Escherichia coli O127:H6 (strain E2348/69 / EPEC).